A 157-amino-acid chain; its full sequence is Probable calcium-binding protein CML23 (157 aa).

4 EF-hand domains span residues 11 to 46 (GSME…LSPN), 47 to 82 (ASQE…SDQS), 86 to 121 (SAIR…LGEK), and 122 to 157 (CSIQ…NGSA). The Ca(2+) site is built by D24, N26, D28, K30, E35, D60, D62, N64, E71, D99, D101, N103, R105, E110, D135, D137, D139, C141, and E146.

In terms of biological role, potential calcium sensor. The chain is Probable calcium-binding protein CML23 (CML23) from Arabidopsis thaliana (Mouse-ear cress).